Here is a 208-residue protein sequence, read N- to C-terminus: Elongation factor Ts, chloroplastic (208 aa).

The protein belongs to the EF-Ts family.

Its subcellular location is the plastid. It is found in the chloroplast. Functionally, associates with the EF-Tu.GDP complex and induces the exchange of GDP to GTP. It remains bound to the aminoacyl-tRNA.EF-Tu.GTP complex up to the GTP hydrolysis stage on the ribosome. The chain is Elongation factor Ts, chloroplastic (tsf) from Cyanidium caldarium (Red alga).